The primary structure comprises 547 residues: Glucose-6-phosphate isomerase (547 aa).

The active-site Proton donor is the glutamate 351. Residues histidine 382 and lysine 509 contribute to the active site.

The protein belongs to the GPI family.

It localises to the cytoplasm. The enzyme catalyses alpha-D-glucose 6-phosphate = beta-D-fructose 6-phosphate. It participates in carbohydrate biosynthesis; gluconeogenesis. It functions in the pathway carbohydrate degradation; glycolysis; D-glyceraldehyde 3-phosphate and glycerone phosphate from D-glucose: step 2/4. Catalyzes the reversible isomerization of glucose-6-phosphate to fructose-6-phosphate. This chain is Glucose-6-phosphate isomerase, found in Coxiella burnetii (strain Dugway 5J108-111).